Consider the following 217-residue polypeptide: Protein-L-isoaspartate O-methyltransferase (217 aa).

Ser61 is a catalytic residue.

This sequence belongs to the methyltransferase superfamily. L-isoaspartyl/D-aspartyl protein methyltransferase family.

Its subcellular location is the cytoplasm. It catalyses the reaction [protein]-L-isoaspartate + S-adenosyl-L-methionine = [protein]-L-isoaspartate alpha-methyl ester + S-adenosyl-L-homocysteine. In terms of biological role, catalyzes the methyl esterification of L-isoaspartyl residues in peptides and proteins that result from spontaneous decomposition of normal L-aspartyl and L-asparaginyl residues. It plays a role in the repair and/or degradation of damaged proteins. This is Protein-L-isoaspartate O-methyltransferase from Syntrophotalea carbinolica (strain DSM 2380 / NBRC 103641 / GraBd1) (Pelobacter carbinolicus).